Reading from the N-terminus, the 580-residue chain is uncharacterized protein (580 aa).

The region spanning P300–D525 is the PE-PPE domain.

Belongs to the mycobacterial PPE family.

This is an uncharacterized protein from Mycobacterium tuberculosis (strain CDC 1551 / Oshkosh).